Consider the following 257-residue polypeptide: 5'-nucleotidase SurE (257 aa).

Residues D15, D16, S46, and N99 each contribute to the a divalent metal cation site.

Belongs to the SurE nucleotidase family. A divalent metal cation serves as cofactor.

It is found in the cytoplasm. It catalyses the reaction a ribonucleoside 5'-phosphate + H2O = a ribonucleoside + phosphate. Its function is as follows. Nucleotidase that shows phosphatase activity on nucleoside 5'-monophosphates. The polypeptide is 5'-nucleotidase SurE (Aliivibrio fischeri (strain ATCC 700601 / ES114) (Vibrio fischeri)).